Reading from the N-terminus, the 111-residue chain is Large ribosomal subunit protein P1 (111 aa).

Residues 65 to 89 (SGAGSGPAPAAAAAAPAAGGAAPAA) show a composition bias toward low complexity. Residues 65-111 (SGAGSGPAPAAAAAAPAAGGAAPAAETKKKEEPKEESDDDMGFGLFD) are disordered.

This sequence belongs to the eukaryotic ribosomal protein P1/P2 family. P1 and P2 exist as dimers at the large ribosomal subunit.

Plays an important role in the elongation step of protein synthesis. In Caenorhabditis elegans, this protein is Large ribosomal subunit protein P1.